Here is a 282-residue protein sequence, read N- to C-terminus: AB hydrolase superfamily protein FGSG_00045 (282 aa).

Polar residues predominate over residues 1–10; the sequence is MAPISSTRPS. The tract at residues 1–22 is disordered; sequence MAPISSTRPSHSIAADNPNPTT. Residues 22–270 form the AB hydrolase-1 domain; sequence TQVNFNTNMT…FADMVKRWII (249 aa).

Belongs to the AB hydrolase superfamily.

It functions in the pathway mycotoxin biosynthesis. Its function is as follows. AB hydrolase superfamily protein; part of the gene cluster that mediates the biosynthesis of gramillins A and B, bicyclic lipopeptides that induce cell death in maize leaves but not in wheat leaves. The nonribosomal peptide synthetase GRA1 incorporates respectively a glutamic adic (Glu), a leucine (Leu), a serine (Ser), a hydroxyglutamine (HOGln), a 2-amino decanoic acid, and 2 cysteins (CysB and CysA). The biosynthesis of 2-amino decanoic acid incorporated in gramillins could be initiated by a fatty acid synthase composed of the alpha and beta subunits FGSG_00036 and FGSG_11656. The cytochrome P450 monooxygenase FGSG_15680 could hydroxylate the fatty acid chain. Subsequent oxidation to the ketone by the oxidoreductase FGSG_00048 and transamination by aminotransferase FGSG_00049 could form 2-amino-decanoic acid. On the other hand, FGSG_15680 could also be responsible for the HO-modified glutamine at the gamma-position. Whether hydroxylation occurs on the fully assembled product or on the Gln residue prior to assembly into the gramillins requires further proof. The thioredoxin FGSG_00043 could also be required for the disulfide-bond formation between CysA and CysB. The specific involvement of the remaining proteins from the cluster is more difficult to discern, but could have broader regulatory (FGSG_00040 and FGSG_11657) or enzymatic functions (FGSG_00044 and FGSG_00045). The final C-domain of GRA1 does not possess the expected sequence of a termination CT domain, often implicated in macrocyclization and release of a cyclopeptidein fungal NRPs; and the thioesterase FGSG_00047 may act in concert with the terminal C-domain of GRA1 to catalyze the formation of the macrocyclic anhydride and release of the products. This is AB hydrolase superfamily protein FGSG_00045 from Gibberella zeae (strain ATCC MYA-4620 / CBS 123657 / FGSC 9075 / NRRL 31084 / PH-1) (Wheat head blight fungus).